Consider the following 32-residue polypeptide: Ranatuerin-2CSa (32 aa).

Cys-27 and Cys-32 form a disulfide bridge.

Expressed by the skin glands.

The protein resides in the secreted. Its subcellular location is the target cell membrane. Functionally, antibacterial peptide with amphipathic alpha-helical structure. Active against E.coli ATCC 25726 (MIC=4-5 uM) and S.aureus ATCC 25923 (MIC=8-10 uM). Has a weak hemolytic activity on human erythrocytes (LC(50)=150-160 uM). This chain is Ranatuerin-2CSa, found in Rana cascadae (Cascades frog).